Reading from the N-terminus, the 178-residue chain is Protein RICE FLOWERING LOCUS T 1 (178 aa).

Belongs to the phosphatidylethanolamine-binding protein family. Interacts with FTIP1. Expressed in leaf vascular tissues. Specifically expressed in the phloem including companion cells.

Its subcellular location is the cytoplasm. It localises to the nucleus. The protein localises to the endoplasmic reticulum. Functionally, probable mobile flower-promoting signal (florigen) that moves from the leaf to the shoot apical meristem (SAM) and induces flowering. Promotes the transition from vegetative growth to flowering under long day (LD) conditions. Acts upstream of MADS14 and MADS15. May also participate in the promotion of flowering under short day (SD) conditions. The sequence is that of Protein RICE FLOWERING LOCUS T 1 from Oryza sativa subsp. japonica (Rice).